The chain runs to 340 residues: Pilin (340 aa).

Positions 1–23 (MKLRHLLLTGAALTSFAATTVHG) are cleaved as a signal peptide. 2 consecutive cross-links (isoaspartyl lysine isopeptide (Lys-Asn)) follow at residues 36-168 (KNLD…QFKN) and 179-303 (KKVS…TFTN). Lys-161 participates in a covalent cross-link: Threonyl lysine isopeptide (Lys-Thr) (interchain with T-311). An EVPTG sorting signal motif is present at residues 308–312 (EVPTG). At Thr-311 the chain carries Pentaglycyl murein peptidoglycan amidated threonine; alternate. Thr-311 is covalently cross-linked (Threonyl lysine isopeptide (Thr-Lys) (interchain with K-161); alternate). The propeptide at 312–340 (GVAMTVAPYIALGIVAVGGALYFVKKKNA) is removed by sortase C1.

Belongs to the Streptococcus pilin family. Forms columns of about 3-nanometers in diameter of head-to-tail-assembled molecules. Post-translationally, proteolytically processed and assembled in pili through a transpeptidation reaction catalyzed by the sortase C1. The last pilin subunit is cross-linked to the peptidoglycan.

It localises to the secreted. The protein resides in the cell wall. It is found in the fimbrium. Its function is as follows. Major component of the pilus. A stack of the pilin subunits, joined by intermolecular isopeptide bonds, forms the pilus. The pilus is required for bacterial adhesion to host cells, for bacterial aggregation, and for biofilm formation. The protein is Pilin of Streptococcus pyogenes serotype M1.